The chain runs to 533 residues: Ribonuclease Y (533 aa).

The tract at residues 16–41 (VERIRRRAEQDAAEQTERVRREAEQI) is disordered. The span at 22-41 (RAEQDAAEQTERVRREAEQI) shows a compositional bias: basic and acidic residues. The 67-residue stretch at 223-289 (VVSVLHLPSD…RITLTALVSD (67 aa)) folds into the KH domain. The 94-residue stretch at 349-442 (VLAHLVESAH…TQAADQISGG (94 aa)) folds into the HD domain.

The protein belongs to the RNase Y family.

Its function is as follows. Endoribonuclease that initiates mRNA decay. This is Ribonuclease Y from Parafrankia sp. (strain EAN1pec).